The following is a 187-amino-acid chain: Calmodulin-like protein 1 (187 aa).

Ala2 carries the N-acetylalanine modification. EF-hand domains are found at residues 8 to 43 (EQIV…LGQN), 44 to 79 (PTEA…KLRD), 81 to 116 (DSEE…IGER), and 117 to 152 (LTDE…KKRR). Residues Asp21, Asp23, Asp25, Ser27, Glu32, Asp57, Asp59, Asn61, Asn63, Glu68, Asp94, Asp96, Asn98, Glu105, Asp130, Asp132, Asp134, Gln136, and Glu141 each coordinate Ca(2+). The tract at residues 153–187 (KRIEEKREHDGGSRTKSAGPSAAPASKRGQKCVIL) is disordered. A compositionally biased stretch (basic and acidic residues) spans 154-165 (RIEEKREHDGGS). Residues 169–178 (SAGPSAAPAS) are compositionally biased toward low complexity. Cysteine methyl ester is present on Cys184. Cys184 carries the S-farnesyl cysteine lipid modification. The propeptide at 185-187 (VIL) is removed in mature form.

This sequence belongs to the calmodulin family. As to expression, expressed in roots, etiolated shoots and flowers.

It is found in the membrane. Calcium-binding protein that binds and activates CAMK1, a calcium/calmodulin-dependent kinase. The sequence is that of Calmodulin-like protein 1 (CML1) from Oryza sativa subsp. indica (Rice).